The primary structure comprises 549 residues: Dihydroxy-acid dehydratase (549 aa).

Aspartate 78 contacts Mg(2+). Cysteine 119 is a binding site for [2Fe-2S] cluster. Positions 120 and 121 each coordinate Mg(2+). The residue at position 121 (lysine 121) is an N6-carboxylysine. Residue cysteine 191 coordinates [2Fe-2S] cluster. Glutamate 441 provides a ligand contact to Mg(2+). Residue serine 466 is the Proton acceptor of the active site.

Belongs to the IlvD/Edd family. As to quaternary structure, homodimer. Requires [2Fe-2S] cluster as cofactor. It depends on Mg(2+) as a cofactor.

The enzyme catalyses (2R)-2,3-dihydroxy-3-methylbutanoate = 3-methyl-2-oxobutanoate + H2O. It catalyses the reaction (2R,3R)-2,3-dihydroxy-3-methylpentanoate = (S)-3-methyl-2-oxopentanoate + H2O. It functions in the pathway amino-acid biosynthesis; L-isoleucine biosynthesis; L-isoleucine from 2-oxobutanoate: step 3/4. It participates in amino-acid biosynthesis; L-valine biosynthesis; L-valine from pyruvate: step 3/4. Functions in the biosynthesis of branched-chain amino acids. Catalyzes the dehydration of (2R,3R)-2,3-dihydroxy-3-methylpentanoate (2,3-dihydroxy-3-methylvalerate) into 2-oxo-3-methylpentanoate (2-oxo-3-methylvalerate) and of (2R)-2,3-dihydroxy-3-methylbutanoate (2,3-dihydroxyisovalerate) into 2-oxo-3-methylbutanoate (2-oxoisovalerate), the penultimate precursor to L-isoleucine and L-valine, respectively. The protein is Dihydroxy-acid dehydratase of Methanothermobacter thermautotrophicus (strain ATCC 29096 / DSM 1053 / JCM 10044 / NBRC 100330 / Delta H) (Methanobacterium thermoautotrophicum).